The chain runs to 274 residues: NH(3)-dependent NAD(+) synthetase (274 aa).

46–53 (GISGGQDS) contacts ATP. Residue Asp52 participates in Mg(2+) binding. Arg140 contributes to the deamido-NAD(+) binding site. Residue Thr160 coordinates ATP. Glu165 provides a ligand contact to Mg(2+). 2 residues coordinate deamido-NAD(+): Lys173 and Asp180. ATP contacts are provided by Lys189 and Thr211. 260–261 (HK) serves as a coordination point for deamido-NAD(+).

This sequence belongs to the NAD synthetase family. In terms of assembly, homodimer.

The catalysed reaction is deamido-NAD(+) + NH4(+) + ATP = AMP + diphosphate + NAD(+) + H(+). It participates in cofactor biosynthesis; NAD(+) biosynthesis; NAD(+) from deamido-NAD(+) (ammonia route): step 1/1. Catalyzes the ATP-dependent amidation of deamido-NAD to form NAD. Uses ammonia as a nitrogen source. This chain is NH(3)-dependent NAD(+) synthetase, found in Listeria welshimeri serovar 6b (strain ATCC 35897 / DSM 20650 / CCUG 15529 / CIP 8149 / NCTC 11857 / SLCC 5334 / V8).